A 130-amino-acid polypeptide reads, in one-letter code: Prefoldin subunit alpha (130 aa).

The protein belongs to the prefoldin subunit alpha family. As to quaternary structure, heterohexamer of two alpha and four beta subunits.

The protein resides in the cytoplasm. Functionally, molecular chaperone capable of stabilizing a range of proteins. Seems to fulfill an ATP-independent, HSP70-like function in archaeal de novo protein folding. This chain is Prefoldin subunit alpha (pfdA), found in Thermoplasma acidophilum (strain ATCC 25905 / DSM 1728 / JCM 9062 / NBRC 15155 / AMRC-C165).